Consider the following 643-residue polypeptide: Threonine--tRNA ligase (643 aa).

A TGS domain is found at 3-64 (DMINITFPDG…QEDGAVEIIT (62 aa)). The segment at 245–542 (DHRKLGKELK…LIEEHKGALP (298 aa)) is catalytic. Zn(2+) is bound by residues C338, H389, and H519.

The protein belongs to the class-II aminoacyl-tRNA synthetase family. In terms of assembly, homodimer. Zn(2+) serves as cofactor.

It is found in the cytoplasm. The catalysed reaction is tRNA(Thr) + L-threonine + ATP = L-threonyl-tRNA(Thr) + AMP + diphosphate + H(+). Functionally, catalyzes the attachment of threonine to tRNA(Thr) in a two-step reaction: L-threonine is first activated by ATP to form Thr-AMP and then transferred to the acceptor end of tRNA(Thr). Also edits incorrectly charged L-seryl-tRNA(Thr). The sequence is that of Threonine--tRNA ligase from Bacillus velezensis (strain DSM 23117 / BGSC 10A6 / LMG 26770 / FZB42) (Bacillus amyloliquefaciens subsp. plantarum).